A 1207-amino-acid polypeptide reads, in one-letter code: DNA-directed RNA polymerase subunit beta' (1207 aa).

Zn(2+) contacts are provided by Cys-60, Cys-62, Cys-75, and Cys-78. 3 residues coordinate Mg(2+): Asp-449, Asp-451, and Asp-453. Zn(2+) contacts are provided by Cys-822, Cys-896, Cys-903, and Cys-906.

Belongs to the RNA polymerase beta' chain family. The RNAP catalytic core consists of 2 alpha, 1 beta, 1 beta' and 1 omega subunit. When a sigma factor is associated with the core the holoenzyme is formed, which can initiate transcription. It depends on Mg(2+) as a cofactor. Zn(2+) is required as a cofactor.

The catalysed reaction is RNA(n) + a ribonucleoside 5'-triphosphate = RNA(n+1) + diphosphate. Functionally, DNA-dependent RNA polymerase catalyzes the transcription of DNA into RNA using the four ribonucleoside triphosphates as substrates. This is DNA-directed RNA polymerase subunit beta' from Staphylococcus epidermidis (strain ATCC 35984 / DSM 28319 / BCRC 17069 / CCUG 31568 / BM 3577 / RP62A).